Here is a 184-residue protein sequence, read N- to C-terminus: Protein DMP2 (184 aa).

The next 4 helical transmembrane spans lie at 19–39 (LIKL…PVLT), 45–65 (LLIN…SCCF), 105–125 (VGDF…SLLD), and 142–162 (IFLM…FTVF).

It belongs to the plant DMP1 protein family. In terms of tissue distribution, expressed constitutively in leaves, stems, flowers, siliques and roots.

It localises to the endoplasmic reticulum membrane. It is found in the vacuole membrane. Its function is as follows. Involved in membrane remodeling. In Arabidopsis thaliana (Mouse-ear cress), this protein is Protein DMP2.